Consider the following 208-residue polypeptide: Thymidylate kinase (208 aa).

Residue 10–17 (GLEGAGKT) coordinates ATP.

Belongs to the thymidylate kinase family.

It catalyses the reaction dTMP + ATP = dTDP + ADP. Functionally, phosphorylation of dTMP to form dTDP in both de novo and salvage pathways of dTTP synthesis. The polypeptide is Thymidylate kinase (Actinobacillus pleuropneumoniae serotype 5b (strain L20)).